We begin with the raw amino-acid sequence, 312 residues long: Probable phytanoyl-CoA dioxygenase (312 aa).

2-oxoglutarate is bound by residues Lys-84, Met-124, 142-144 (HQD), and Trp-160. Fe cation contacts are provided by His-142 and Asp-144. His-231 is a binding site for Fe cation. 2-oxoglutarate-binding residues include Ser-233 and Arg-242.

Belongs to the PhyH family. Fe cation is required as a cofactor. Requires L-ascorbate as cofactor.

The catalysed reaction is phytanoyl-CoA + 2-oxoglutarate + O2 = 2-hydroxyphytanoyl-CoA + succinate + CO2. It functions in the pathway lipid metabolism; fatty acid metabolism. Functionally, converts phytanoyl-CoA to 2-hydroxyphytanoyl-CoA. This is Probable phytanoyl-CoA dioxygenase from Caenorhabditis elegans.